The primary structure comprises 150 residues: Avidin-related protein 1 (150 aa).

The first 24 residues, 1-24 (MVHATSPLLLLLLLSLALVAPGLS), serve as a signal peptide directing secretion. The Avidin-like domain occupies 26–147 (RKCSLTGKWD…GNNDFTRQRT (122 aa)). The cysteines at positions 28 and 105 are disulfide-linked. Biotin is bound by residues Asn36 and Ser40. Asn54 is a glycosylation site (N-linked (GlcNAc...) asparagine). Biotin-binding residues include Tyr57, Thr59, and Asp63. N-linked (GlcNAc...) asparagine glycosylation is found at Asn67 and Asn93. Residues Ser95, Ser99, and Asn140 each contribute to the biotin site.

The protein belongs to the avidin/streptavidin family. In terms of assembly, homotetramer. Glycosylated.

It localises to the secreted. Forms a strong non-covalent specific complex with biotin. In Gallus gallus (Chicken), this protein is Avidin-related protein 1 (AVR1).